Reading from the N-terminus, the 149-residue chain is Large ribosomal subunit protein bL9 (149 aa).

Belongs to the bacterial ribosomal protein bL9 family.

In terms of biological role, binds to the 23S rRNA. The chain is Large ribosomal subunit protein bL9 from Anaeromyxobacter dehalogenans (strain 2CP-C).